Consider the following 365-residue polypeptide: DNA replication and repair protein RecF (365 aa).

30–37 (GLNGSGKT) provides a ligand contact to ATP.

It belongs to the RecF family.

The protein localises to the cytoplasm. The RecF protein is involved in DNA metabolism; it is required for DNA replication and normal SOS inducibility. RecF binds preferentially to single-stranded, linear DNA. It also seems to bind ATP. This Cellvibrio japonicus (strain Ueda107) (Pseudomonas fluorescens subsp. cellulosa) protein is DNA replication and repair protein RecF.